The following is a 227-amino-acid chain: Cytochrome c oxidase subunit 2 (227 aa).

Over 1–14 (MAYPFQLGLQDATS) the chain is Mitochondrial intermembrane. Residues 15-45 (PIMEELTNFHDHTLMIVFLISTLVLYIISLM) traverse the membrane as a helical segment. Topologically, residues 46–59 (LTTKLTHTSTMDAQ) are mitochondrial matrix. Residues 60–87 (EVETIWTILPAVILILIALPSLRILYMM) traverse the membrane as a helical segment. Over 88–227 (DEINNPALTV…YFEDWSASMI (140 aa)) the chain is Mitochondrial intermembrane. Cu cation contacts are provided by H161, C196, E198, C200, H204, and M207. E198 provides a ligand contact to Mg(2+). Y218 carries the phosphotyrosine modification.

It belongs to the cytochrome c oxidase subunit 2 family. In terms of assembly, component of the cytochrome c oxidase (complex IV, CIV), a multisubunit enzyme composed of 14 subunits. The complex is composed of a catalytic core of 3 subunits MT-CO1, MT-CO2 and MT-CO3, encoded in the mitochondrial DNA, and 11 supernumerary subunits COX4I, COX5A, COX5B, COX6A, COX6B, COX6C, COX7A, COX7B, COX7C, COX8 and NDUFA4, which are encoded in the nuclear genome. The complex exists as a monomer or a dimer and forms supercomplexes (SCs) in the inner mitochondrial membrane with NADH-ubiquinone oxidoreductase (complex I, CI) and ubiquinol-cytochrome c oxidoreductase (cytochrome b-c1 complex, complex III, CIII), resulting in different assemblies (supercomplex SCI(1)III(2)IV(1) and megacomplex MCI(2)III(2)IV(2)). Found in a complex with TMEM177, COA6, COX18, COX20, SCO1 and SCO2. Interacts with TMEM177 in a COX20-dependent manner. Interacts with COX20. Interacts with COX16. It depends on Cu cation as a cofactor.

Its subcellular location is the mitochondrion inner membrane. The catalysed reaction is 4 Fe(II)-[cytochrome c] + O2 + 8 H(+)(in) = 4 Fe(III)-[cytochrome c] + 2 H2O + 4 H(+)(out). Its function is as follows. Component of the cytochrome c oxidase, the last enzyme in the mitochondrial electron transport chain which drives oxidative phosphorylation. The respiratory chain contains 3 multisubunit complexes succinate dehydrogenase (complex II, CII), ubiquinol-cytochrome c oxidoreductase (cytochrome b-c1 complex, complex III, CIII) and cytochrome c oxidase (complex IV, CIV), that cooperate to transfer electrons derived from NADH and succinate to molecular oxygen, creating an electrochemical gradient over the inner membrane that drives transmembrane transport and the ATP synthase. Cytochrome c oxidase is the component of the respiratory chain that catalyzes the reduction of oxygen to water. Electrons originating from reduced cytochrome c in the intermembrane space (IMS) are transferred via the dinuclear copper A center (CU(A)) of subunit 2 and heme A of subunit 1 to the active site in subunit 1, a binuclear center (BNC) formed by heme A3 and copper B (CU(B)). The BNC reduces molecular oxygen to 2 water molecules using 4 electrons from cytochrome c in the IMS and 4 protons from the mitochondrial matrix. In Hybomys univittatus (Peter's striped mouse), this protein is Cytochrome c oxidase subunit 2 (MT-CO2).